A 106-amino-acid chain; its full sequence is Large ribosomal subunit protein uL24 (106 aa).

The protein belongs to the universal ribosomal protein uL24 family. Part of the 50S ribosomal subunit.

In terms of biological role, one of two assembly initiator proteins, it binds directly to the 5'-end of the 23S rRNA, where it nucleates assembly of the 50S subunit. Its function is as follows. One of the proteins that surrounds the polypeptide exit tunnel on the outside of the subunit. In Acinetobacter baylyi (strain ATCC 33305 / BD413 / ADP1), this protein is Large ribosomal subunit protein uL24.